Reading from the N-terminus, the 130-residue chain is Small ribosomal subunit protein uS8 (130 aa).

Belongs to the universal ribosomal protein uS8 family. Part of the 30S ribosomal subunit.

One of the primary rRNA binding proteins, it binds directly to 16S rRNA central domain where it helps coordinate assembly of the platform of the 30S subunit. The sequence is that of Small ribosomal subunit protein uS8 from Thermococcus gammatolerans (strain DSM 15229 / JCM 11827 / EJ3).